We begin with the raw amino-acid sequence, 704 residues long: Probable ferric reduction oxidase 1 (704 aa).

The Cytoplasmic portion of the chain corresponds to 1–16; that stretch reads MGVGEMNKEVIDKVIK. Residues 17 to 36 traverse the membrane as a helical segment; sequence FLMMVILMGTIVIWIMMPTS. Residues 37–62 are Lumenal-facing; the sequence is TYKEIWLTSMRAKLGKSIYYGRPGVN. A helical membrane pass occupies residues 63–81; sequence LLVYMFPMILLAFLGCIYL. Over 82-115 the chain is Cytoplasmic; it reads HLKKSTTVNQFNSGVEKKRAKFGALRRPMLVNGP. The helical transmembrane segment at 116 to 139 threads the bilayer; the sequence is LGIVTVTEVMFLTMFMALLLWSLA. Topologically, residues 140–207 are lumenal; it reads NYMYRTFVNV…VGLTSESSIK (68 aa). A Ferric oxidoreductase domain is found at 174–294; it reads GIVGNICLAF…YLYIVFMLFF (121 aa). Residues 208–231 traverse the membrane as a helical segment; the sequence is YHIWLGHLVMIIFTSHGLCYFIYW. Residues His-209 and His-223 each coordinate heme. At 232 to 282 the chain is on the cytoplasmic side; the sequence is ISKNQLVSKMLEWDRTAVSNLAGEIALVAGLMMWVTTYPKIRRRLFEVFFY. The chain crosses the membrane as a helical span at residues 283-307; sequence SHYLYIVFMLFFVFHVGISHALIPL. Residues His-284 and His-297 each contribute to the heme site. At 308 to 329 the chain is on the lumenal side; the sequence is PGFYIFLVDRFLRFLQSRNNVK. The FAD-binding FR-type domain maps to 323 to 430; the sequence is QSRNNVKLVS…EGPYGPSSTD (108 aa). Residues 330 to 350 traverse the membrane as a helical segment; sequence LVSARVLPCDTVELNFSKNPM. Residues 351–550 lie on the Cytoplasmic side of the membrane; that stretch reads LMYSPTSTMF…PISPILGPNS (200 aa). 372–375 contributes to the FAD binding site; it reads HPFT. 422–425 contributes to the NAD(+) binding site; sequence GPYG. The chain crosses the membrane as a helical span at residues 551–573; it reads WLCLAAILSSSFMIFIVIIAIIT. The Lumenal portion of the chain corresponds to 574–592; the sequence is RYHIHPIDQNSEKYTWAYK. Residues 593 to 614 traverse the membrane as a helical segment; sequence SLIYLVSISITVVTTSTAAMLW. At 615–704 the chain is on the cytoplasmic side; sequence NKKKYYAKND…LHFESISFSW (90 aa).

This sequence belongs to the ferric reductase (FRE) family. Requires FAD as cofactor. Expressed in siliques. Detected in roots.

It localises to the membrane. The enzyme catalyses 2 a Fe(II)-siderophore + NAD(+) + H(+) = 2 a Fe(III)-siderophore + NADH. Its function is as follows. Ferric chelate reductase involved in iron reduction in roots. May participate in the transport of electrons to a Fe(3+) ion via FAD and heme intermediates. The protein is Probable ferric reduction oxidase 1 (FRO1) of Arabidopsis thaliana (Mouse-ear cress).